The sequence spans 349 residues: Protein-glutamate methylesterase/protein-glutamine glutaminase (349 aa).

The Response regulatory domain occupies 5 to 122 (RVLSVDDSAL…REGMLAYSEM (118 aa)). Aspartate 56 carries the post-translational modification 4-aspartylphosphate. A CheB-type methylesterase domain is found at 152–344 (LLSSEKLIAI…QQMLATISAG (193 aa)). Catalysis depends on residues serine 164, histidine 190, and aspartate 286.

Belongs to the CheB family. In terms of processing, phosphorylated by CheA. Phosphorylation of the N-terminal regulatory domain activates the methylesterase activity.

It localises to the cytoplasm. It carries out the reaction [protein]-L-glutamate 5-O-methyl ester + H2O = L-glutamyl-[protein] + methanol + H(+). The enzyme catalyses L-glutaminyl-[protein] + H2O = L-glutamyl-[protein] + NH4(+). Its function is as follows. Involved in chemotaxis. Part of a chemotaxis signal transduction system that modulates chemotaxis in response to various stimuli. Catalyzes the demethylation of specific methylglutamate residues introduced into the chemoreceptors (methyl-accepting chemotaxis proteins or MCP) by CheR. Also mediates the irreversible deamidation of specific glutamine residues to glutamic acid. The protein is Protein-glutamate methylesterase/protein-glutamine glutaminase of Shigella flexneri.